Consider the following 706-residue polypeptide: Polyribonucleotide nucleotidyltransferase (706 aa).

Asp487 and Asp493 together coordinate Mg(2+). The 60-residue stretch at 553–612 folds into the KH domain; the sequence is PRLFTMKISQDKIRDVIGKGGETIRSITAETGTEINIAEDGTITIAATTQEAGDAAKKRI. The region spanning 622–692 is the S1 motif domain; it reads GKVYEGTVVK…DRGRVRLSIK (71 aa).

The protein belongs to the polyribonucleotide nucleotidyltransferase family. Requires Mg(2+) as cofactor.

Its subcellular location is the cytoplasm. It catalyses the reaction RNA(n+1) + phosphate = RNA(n) + a ribonucleoside 5'-diphosphate. In terms of biological role, involved in mRNA degradation. Catalyzes the phosphorolysis of single-stranded polyribonucleotides processively in the 3'- to 5'-direction. In Neisseria gonorrhoeae (strain ATCC 700825 / FA 1090), this protein is Polyribonucleotide nucleotidyltransferase.